Here is a 226-residue protein sequence, read N- to C-terminus: Putative methyltransferase RP459 (226 aa).

This sequence belongs to the methyltransferase superfamily.

In Rickettsia prowazekii (strain Madrid E), this protein is Putative methyltransferase RP459.